The primary structure comprises 148 residues: Large ribosomal subunit protein bL9 (148 aa).

It belongs to the bacterial ribosomal protein bL9 family.

Functionally, binds to the 23S rRNA. This is Large ribosomal subunit protein bL9 from Bifidobacterium longum (strain DJO10A).